A 417-amino-acid polypeptide reads, in one-letter code: MKFVLKSISKNSGRLGQLRIKQSKELQTPLLLQTTKGGSIPYLSAEVFDLVSQEHQQVLQLTLSTMDQMSESLAQWNRSLSDYVGYPGYNTLLLLRDPCETTPTGGNDRDVVPLFTRHGKESLTAARYMDMVANFAPDVYQGLCDADTNPESTKKRVQKSVDRTERFMELCYEQHSKLARLKDSTLLAPIVGGYSTFARTQSIKHARQQPAGSYGGYILEGFHTNGLAATELKAAQLLPIVEHCVQQLEEEQPRLMPGAYTPLLLLELIRLGVDVFDSSYAYCAATNYKALTFSYVRDKAEHAAFLDVTDEAIKEDFKPLLEDCSCLSCQKHTRAYIHHLYKTHELLGTILLMIHNLHHYMCFFEAIRASMAADQLPELIEHVRMQNTTAEVNYRIEPNNKVVGKAAMGKGFIAAAV.

The Zn(2+) site is built by cysteine 324, cysteine 326, cysteine 329, and histidine 355.

Belongs to the queuine tRNA-ribosyltransferase family. QTRT2 subfamily. As to quaternary structure, heterodimer of a catalytic subunit and an accessory subunit. The cofactor is Zn(2+).

Its subcellular location is the cytoplasm. Non-catalytic subunit of the queuine tRNA-ribosyltransferase (TGT) that catalyzes the base-exchange of a guanine (G) residue with queuine (Q) at position 34 (anticodon wobble position) in tRNAs with GU(N) anticodons (tRNA-Asp, -Asn, -His and -Tyr), resulting in the hypermodified nucleoside queuosine (7-(((4,5-cis-dihydroxy-2-cyclopenten-1-yl)amino)methyl)-7-deazaguanosine). This chain is Queuine tRNA-ribosyltransferase accessory subunit 2, found in Drosophila virilis (Fruit fly).